Reading from the N-terminus, the 419-residue chain is Synaptosomal-associated protein 47 (419 aa).

T-SNARE coiled-coil homology domains lie at 109–171 (AANP…LTEL) and 356–418 (KDWP…MRKL).

Belongs to the SVAP1 family. Associates with the BLOC-1 complex. Interacts with BLOC1S6. Forms a complex containing SNAP47, VAMP2 and STX1A.

Its subcellular location is the endomembrane system. The protein localises to the cytoplasm. It localises to the perinuclear region. Functionally, may play a role in intracellular membrane fusion. This chain is Synaptosomal-associated protein 47 (Snap47), found in Rattus norvegicus (Rat).